The primary structure comprises 140 residues: Aspartate 1-decarboxylase (140 aa).

The Schiff-base intermediate with substrate; via pyruvic acid role is filled by S25. S25 carries the pyruvic acid (Ser) modification. Position 57 (T57) interacts with substrate. The active-site Proton donor is Y58. 73 to 75 (GAA) is a binding site for substrate.

It belongs to the PanD family. In terms of assembly, heterooctamer of four alpha and four beta subunits. Pyruvate is required as a cofactor. Is synthesized initially as an inactive proenzyme, which is activated by self-cleavage at a specific serine bond to produce a beta-subunit with a hydroxyl group at its C-terminus and an alpha-subunit with a pyruvoyl group at its N-terminus.

It localises to the cytoplasm. It catalyses the reaction L-aspartate + H(+) = beta-alanine + CO2. Its pathway is cofactor biosynthesis; (R)-pantothenate biosynthesis; beta-alanine from L-aspartate: step 1/1. Functionally, catalyzes the pyruvoyl-dependent decarboxylation of aspartate to produce beta-alanine. This is Aspartate 1-decarboxylase from Persephonella marina (strain DSM 14350 / EX-H1).